The following is a 69-amino-acid chain: Putative membrane protein insertion efficiency factor (69 aa).

It belongs to the UPF0161 family.

The protein localises to the cell membrane. In terms of biological role, could be involved in insertion of integral membrane proteins into the membrane. This Thermoanaerobacter pseudethanolicus (strain ATCC 33223 / 39E) (Clostridium thermohydrosulfuricum) protein is Putative membrane protein insertion efficiency factor.